Consider the following 379-residue polypeptide: Mating-type protein MAT-1 (379 aa).

Positions arginine 60–arginine 117 form a DNA-binding region, alpha box.

It belongs to the MATALPHA1 family.

The protein resides in the nucleus. Its function is as follows. Mating type proteins are sequence specific DNA-binding proteins that act as master switches in fungal differentiation by controlling gene expression in a cell type-specific fashion. Transcriptional activator that induces the transcription of alpha-specific genes. The polypeptide is Mating-type protein MAT-1 (MAT1) (Curvularia kusanoi (Cochliobolus kusanoi)).